A 203-amino-acid chain; its full sequence is Microtubule-associated protein Jupiter (203 aa).

A Phosphoserine modification is found at Ser30. 2 positions are modified to phosphothreonine: Thr41 and Thr102. Over residues 123-132 (LISKGNYNGK) the composition is skewed to polar residues. 2 disordered regions span residues 123 to 163 (LISK…GNPV) and 182 to 203 (NGGS…SGLW). Positions 133–146 (SGSVSSASSSVSSS) are enriched in low complexity. Residues Ser135 and Ser146 each carry the phosphoserine modification.

Belongs to the MAP Jupiter family.

Its subcellular location is the nucleus. The protein localises to the cytoplasm. It localises to the cytoskeleton. The protein resides in the spindle. Binds to all microtubule populations. This is Microtubule-associated protein Jupiter from Drosophila mojavensis (Fruit fly).